Here is a 567-residue protein sequence, read N- to C-terminus: MMAAVPPGLEPWNRVRIPKAGNRSAVTVQNPGAALDLCIAAVIKECHLVILSLKSQTLDAETDVLCAVLYSNHNRMGRHKPHLALKQVEQCLKRLKNMNLEGSIQDLFELFSSNENQPLTTKVCVVPSQPVVELVLMKVLGACKLLLRLLDCCCKTFLLTVKHLGLQEFIILNLVMVGLVSRLWVLYKGVLKRLILLYEPLFGLLQEVARIQPMPYFKDFTFPSDITEFLGQPYFEAFKKKMPIAFAAKGINKLLNKLFLINEQSPRASEETLLGISKKAKQMKINVQNNVDLGQPVKNKRVFKEESSEFDVRAFCNQLKHKATQETSFDFKCSQSRLKTTKYSSQKVIGTPHAKSFVQRFREAESFTQLSEEIQMAVVWCRSKKLKAQAIFLGNKLLKSNRLKHLEAQGTSLPKKLECIKTSICNHLLRGSGIKTSKHHLRQRRSQNKFLRRQRKPQRKLQSTLLREIQQFSQGTRKSATDTSAKWRLSHCTVHRTDLYPNSKQLLNSGVSMPVIQTKEKMIHENLRGIHENETDSWTVMQINKNSTSGTIKETDDIDDIFALMGV.

The residue at position 265 (Ser-265) is a Phosphoserine. The disordered stretch occupies residues Ser-437 to Pro-457. Positions Arg-442–Lys-460 are nuclear localization signal.

This sequence belongs to the nepro family.

The protein resides in the nucleus. It is found in the nucleolus. Functionally, may play a role in cortex development as part of the Notch signaling pathway. Downstream of Notch may repress the expression of proneural genes and inhibit neuronal differentiation thereby maintaining neural progenitors. May also play a role in preimplentation embryo development. This Homo sapiens (Human) protein is Nucleolus and neural progenitor protein.